The primary structure comprises 151 residues: Protein ripply1 (151 aa).

The WRPW motif signature appears at 57 to 60; the sequence is WRPW. Positions 96–131 are ripply homology domain; it reads HPVRLFWPKSRSFDYLYSAGEILLQNFPVQATINLY. Positions 130 to 151 are disordered; it reads LYEDSDSEEEEEDEEQEDEEEK. The segment covering 132-151 has biased composition (acidic residues); sequence EDSDSEEEEEDEEQEDEEEK.

Belongs to the ripply family.

The protein resides in the nucleus. Its function is as follows. Plays a role in somitogenesis. Essential for transcriptional repression of the segmental patterning genes, thus terminating the segmentation program in the presomitic mesoderm, and also required for the maintenance of rostrocaudal polarity in somites. This is Protein ripply1 from Homo sapiens (Human).